The following is a 612-amino-acid chain: Dihydroxy-acid dehydratase (612 aa).

D81 contributes to the Mg(2+) binding site. C122 provides a ligand contact to [2Fe-2S] cluster. Mg(2+) is bound by residues D123 and K124. K124 is modified (N6-carboxylysine). A [2Fe-2S] cluster-binding site is contributed by C193. Mg(2+) is bound at residue E489. S515 serves as the catalytic Proton acceptor.

This sequence belongs to the IlvD/Edd family. As to quaternary structure, homodimer. [2Fe-2S] cluster is required as a cofactor. Mg(2+) serves as cofactor.

The enzyme catalyses (2R)-2,3-dihydroxy-3-methylbutanoate = 3-methyl-2-oxobutanoate + H2O. It carries out the reaction (2R,3R)-2,3-dihydroxy-3-methylpentanoate = (S)-3-methyl-2-oxopentanoate + H2O. Its pathway is amino-acid biosynthesis; L-isoleucine biosynthesis; L-isoleucine from 2-oxobutanoate: step 3/4. It participates in amino-acid biosynthesis; L-valine biosynthesis; L-valine from pyruvate: step 3/4. In terms of biological role, functions in the biosynthesis of branched-chain amino acids. Catalyzes the dehydration of (2R,3R)-2,3-dihydroxy-3-methylpentanoate (2,3-dihydroxy-3-methylvalerate) into 2-oxo-3-methylpentanoate (2-oxo-3-methylvalerate) and of (2R)-2,3-dihydroxy-3-methylbutanoate (2,3-dihydroxyisovalerate) into 2-oxo-3-methylbutanoate (2-oxoisovalerate), the penultimate precursor to L-isoleucine and L-valine, respectively. The sequence is that of Dihydroxy-acid dehydratase from Pseudomonas aeruginosa (strain LESB58).